We begin with the raw amino-acid sequence, 755 residues long: uncharacterized protein (755 aa).

9 helical membrane-spanning segments follow: residues 46-66 (LGLGVGLASQLILLADMGGLY), 70-90 (LKTIFGAWVGAAIAMAVGTIV), 93-113 (GWGLGLAITGFVLFASGYLAV), 118-138 (GAMVGIVTTFAFLLGAQNVST), 143-163 (FTSLAIGGMWSLILAIFIWPF), 411-431 (IAHLTQIPYGFWIVITLIFVL), 446-466 (LLGTFLGVLVMSIALKLIQDP), 482-502 (ALLRFHYSVAVFFITAFALIL), and 514-534 (ALLSRLVCTLIGSAIALGLAF).

The protein belongs to the YccS/YhfK family.

The protein localises to the cell membrane. This is an uncharacterized protein from Synechocystis sp. (strain ATCC 27184 / PCC 6803 / Kazusa).